A 249-amino-acid polypeptide reads, in one-letter code: Hydroxyacylglutathione hydrolase (249 aa).

Residues His53, His55, Asp57, His58, His110, Asp127, and His165 each coordinate Zn(2+).

It belongs to the metallo-beta-lactamase superfamily. Glyoxalase II family. Monomer. The cofactor is Zn(2+).

It catalyses the reaction an S-(2-hydroxyacyl)glutathione + H2O = a 2-hydroxy carboxylate + glutathione + H(+). It participates in secondary metabolite metabolism; methylglyoxal degradation; (R)-lactate from methylglyoxal: step 2/2. In terms of biological role, thiolesterase that catalyzes the hydrolysis of S-D-lactoyl-glutathione to form glutathione and D-lactic acid. This chain is Hydroxyacylglutathione hydrolase, found in Buchnera aphidicola subsp. Baizongia pistaciae (strain Bp).